A 370-amino-acid polypeptide reads, in one-letter code: Transcription factor E2F2 (370 aa).

The disordered stretch occupies residues 1-73; the sequence is MYKRKTASIV…QSQSQPGQQR (73 aa). The segment covering 15-26 has biased composition (low complexity); that stretch reads SAAGTTSSAMMM. Residues 31–49 are compositionally biased toward polar residues; that stretch reads AETSVRSQSYESTPVSMDT. The segment covering 59–73 has biased composition (low complexity); the sequence is SPSNSQSQSQPGQQR. The DNA-binding element occupies 72–137; sequence QRSVGSLVLL…GRHCSLVRWR (66 aa). Residues 137-226 form a dimerization region; that stretch reads RGGGFNNAKD…VDIKRNHYEL (90 aa).

Belongs to the E2F/DP family. In terms of assembly, forms a heterodimer with Dp. Interacts with Rbf/Rbf1 and Rbf2. Component of the DREAM complex, which is at least composed of Myb, Caf1-55, mip40, mip120, mip130, E2f2, Dp, Rbf, Rbf2, lin-52, HDAC1/Rpd3 and l(3)mbt. Ubiquitously expressed in eye disk.

It localises to the nucleus. In terms of biological role, transcriptional repressor that binds to E2f sites and represses E2f-regulated target genes. Binding to E2f sites requires transcription factor Dp. Acts synergistically with Rbf2 to antagonize E2f1-mediated transcriptional activation. Component of the DREAM complex, a multiprotein complex that can both act as a transcription activator or repressor depending on the context. The DREAM complex is required for recruiting E2f2 at differentiation-specific promoters and for stabilizing E2f2-Rbf complexes during S phase. During development, the complex represses transcription of developmentally controlled E2f target genes. During oogenesis, plays a role in restricting DNA synthesis to sites of chorion gene amplification in late stage ovarian follicle cells. Plays an inhibitory role in ionizing radiation (IR)-induced p53-independent apoptosis. May be involved in cell cycle exit by temporarily limiting CycE-dependent activation of E2f-regulated transcription. This chain is Transcription factor E2F2 (E2f2), found in Drosophila melanogaster (Fruit fly).